Here is a 3416-residue protein sequence, read N- to C-terminus: Genome polyprotein (3416 aa).

The segment at 1–34 is disordered; it reads MAKGAVLKGKGGGPPRRVPKETAKKTRQGPGRLP. At 1-99 the chain is on the cytoplasmic side; sequence MAKGAVLKGK…NKRRGKRRST (99 aa). Residues 97-117 constitute a propeptide, ER anchor for the capsid protein C, removed in mature form by serine protease NS3; that stretch reads RSTTGLLTPILLACLATLVFS. Residues 100–120 form a helical membrane-spanning segment; the sequence is TGLLTPILLACLATLVFSATV. Residues 121–243 lie on the Extracellular side of the membrane; the sequence is RRERTGNMVI…HLTRVEGWVW (123 aa). N-linked (GlcNAc...) asparagine; by host glycosylation is present at N145. Residues 244-261 form a helical membrane-spanning segment; that stretch reads KNKFLTAAFCAVVWMVTD. Position 262 (S262) is a topological domain, cytoplasmic. Residues 263 to 281 form a helical membrane-spanning segment; that stretch reads LPTRFIVITVALCLAPTYA. At 282–728 the chain is on the extracellular side; sequence TRCTHLQNRD…HTAFGAAFNT (447 aa). Intrachain disulfides connect C284–C311, C341–C397, C341–C402, C355–C386, C373–C397, and C373–C402. Positions 379–392 are fusion peptide; that stretch reads DRGWGNHCGLFGKG. Residue N435 is glycosylated (N-linked (GlcNAc...) asparagine; by host). Intrachain disulfides connect C467–C571 and C588–C619. A helical membrane pass occupies residues 729-749; sequence IFGGVGFLPRILLGVALAWLG. At 750 to 756 the chain is on the cytoplasmic side; sequence LNSRNPT. The helical transmembrane segment at 757-777 threads the bilayer; that stretch reads LSVGFLITGGLVLTMTLGVGA. At 778–1134 the chain is on the extracellular side; sequence DMGCAIDANR…RSMVLADNGA (357 aa). Intrachain disulfides connect C781–C792, C832–C922, C957–C1002, C1059–C1108, C1070–C1092, and C1091–C1095. N-linked (GlcNAc...) asparagine; by host glycans are attached at residues N862, N985, and N1001. Residues 1135 to 1155 traverse the membrane as a helical segment; it reads MLSEGGVPGIVAVFVVLELVI. Residues 1156 to 1164 lie on the Lumenal side of the membrane; it reads RRRPTTGSS. The helical transmembrane segment at 1165-1185 threads the bilayer; it reads VVWCGMVVLGLVVTGLVTIEG. The Cytoplasmic segment spans residues 1186–1189; that stretch reads LCRY. Residues 1190-1210 form a helical membrane-spanning segment; the sequence is VVAVGILMSMELGPEIVALVL. The Lumenal segment spans residues 1211-1235; sequence LQAVFDMRTGLLVAFAVKRAYTTRE. Residues 1236–1256 form a helical membrane-spanning segment; the sequence is AVATYFLLLVLELGFPEASLS. At 1257–1295 the chain is on the cytoplasmic side; it reads NIWKWADSLAMGALILQACGQEGRTRVGYLLAAMMTQKD. Residues 1296 to 1316 traverse the membrane as a helical segment; it reads MVIIHTGLTIFLSAATAMAVW. The Lumenal segment spans residues 1317–1361; it reads SMIKGQRDQKGLSWATPLAGLLGGEGVGLRLLAFRKLAERRNRRS. Residues 1362–1379 form a helical membrane-spanning segment; it reads FSEPLTVVGVMLTVASGM. Topologically, residues 1380 to 1384 are cytoplasmic; sequence VRHTS. Residues 1385–1405 traverse the membrane as a helical segment; sequence QEALCALVAGAFLLLMMVLGT. Residues 1406–1456 are Lumenal-facing; the sequence is RKMQLTAEWCGEVEWNPDLVNEGGEVNLKVRQDAMGNLHLTEVEKEERAMA. Residues 1412–1451 are interacts with and activates NS3 protease; it reads AEWCGEVEWNPDLVNEGGEVNLKVRQDAMGNLHLTEVEKE. The segment at residues 1457 to 1477 is an intramembrane region (helical); the sequence is LWLLAGLVASAFHWAGILIVL. At 1478–2162 the chain is on the lumenal side; the sequence is AVWTLFEMLG…RMAERDAPEA (685 aa). Residues 1492 to 1671 enclose the Peptidase S7 domain; that stretch reads SELVFSGQET…EAEKSRPEIP (180 aa). Catalysis depends on charge relay system; for serine protease NS3 activity residues H1545, D1569, and S1629. A Helicase ATP-binding domain is found at 1677-1833; the sequence is TGWMSKGQIT…ESNGAIMSEE (157 aa). 1690–1697 is a binding site for ATP; that stretch reads MHPGSGKT. Residues 1781–1784 carry the DEAH box motif; it reads DEAH. The region spanning 1844-2002 is the Helicase C-terminal domain; the sequence is GFDWITEYEG…TLRGPVATFY (159 aa). Residue K1885 is modified to N6-acetyllysine; by host. A helical membrane pass occupies residues 2163 to 2183; sequence FLTIVEVAVLGVATLGILWCF. The Cytoplasmic segment spans residues 2184 to 2191; that stretch reads VARASVSR. The segment at residues 2192 to 2211 is an intramembrane region (helical); sequence MFLGTVVLFAALFLLWIGGV. Residue D2212 is a topological domain, lumenal. The helical transmembrane segment at 2213–2233 threads the bilayer; the sequence is YGHMAGIALIFYTLLTVLQPE. Topologically, residues 2234 to 2246 are cytoplasmic; the sequence is PGKQRSSDDNRLA. Residues 2247–2267 traverse the membrane as a helical segment; the sequence is YFLLGLFSLAGLVTANEMGML. At 2268-2301 the chain is on the lumenal side; that stretch reads DKTKADLAGLVWRGEQRHPAWEEWTNVDIQPARS. Positions 2302–2322 form an intramembrane region, helical; sequence WGTYVLIVSLFTPYMLHQLQT. The Lumenal portion of the chain corresponds to 2323–2345; the sequence is KIQQLVNSSVASGAQAMRDLGGG. The helical intramembrane region spans 2346–2366; sequence TPFFGVAGHVIALGVTSLVGA. Over 2367–2368 the chain is Lumenal; the sequence is TP. Residues 2369–2389 traverse the membrane as a helical segment; sequence MSLGLGVALAAFHLAIVASGL. The Cytoplasmic segment spans residues 2390–2432; that stretch reads EAELTQRAHRVFFSAMVKNPMVDGDVINPFPDGETKPALYERR. The helical transmembrane segment at 2433–2453 threads the bilayer; sequence MSLILAIALCMGSVVLNRTAA. Over 2454–2476 the chain is Lumenal; sequence SMTEAGAVGLAALGQLVHPETET. A helical membrane pass occupies residues 2477 to 2497; it reads LWTMPMACGMAGLVRGSFWGL. The Cytoplasmic portion of the chain corresponds to 2498-3416; sequence LPMGHRLWLR…WDLKLESNII (919 aa). An mRNA cap 0-1 NS5-type MT domain is found at 2514–2778; that stretch reads GGAEGETLGD…EVDLGTGTRC (265 aa). S2569 contributes to the S-adenosyl-L-methionine binding site. S2569 is modified (phosphoserine). Residue K2574 is the For 2'-O-MTase activity of the active site. 6 residues coordinate S-adenosyl-L-methionine: G2599, W2600, T2617, I2618, D2644, and V2645. Catalysis depends on D2659, which acts as the For 2'-O-MTase activity. S-adenosyl-L-methionine is bound at residue I2660. Residues K2696 and E2732 each act as for 2'-O-MTase activity in the active site. The interval 2732–2736 is interaction with host SCRIB; sequence EMYFS. Y2734 contributes to the S-adenosyl-L-methionine binding site. Positions 2952, 2956, 2961, and 2964 each coordinate Zn(2+). One can recognise a RdRp catalytic domain in the interval 3042–3191; the sequence is GLFYADDTAG…RPIDDRFGKA (150 aa). Zn(2+) is bound by residues H3226, C3242, and C3361.

It in the N-terminal section; belongs to the class I-like SAM-binding methyltransferase superfamily. mRNA cap 0-1 NS5-type methyltransferase family. As to quaternary structure, homodimer. Interacts (via N-terminus) with host EXOC1 (via C-terminus); this interaction results in EXOC1 degradation through the proteasome degradation pathway. In terms of assembly, forms heterodimers with envelope protein E in the endoplasmic reticulum and Golgi. Homodimer; in the endoplasmic reticulum and Golgi. Interacts with protein prM. Interacts with non-structural protein 1. As to quaternary structure, homodimer; Homohexamer when secreted. Interacts with envelope protein E. NS1 interacts with NS4B. Interacts with host complement protein CFH; this interaction leads to the degradation of C3. In terms of assembly, interacts (via N-terminus) with serine protease NS3. Forms a heterodimer with serine protease NS3. May form homooligomers. As to quaternary structure, forms a heterodimer with NS2B. Interacts with non-structural protein 2A (via N-terminus). Interacts with NS4B. Interacts with unphosphorylated RNA-directed RNA polymerase NS5; this interaction stimulates RNA-directed RNA polymerase NS5 guanylyltransferase activity. In terms of assembly, interacts with serine protease NS3. Homodimer. Interacts with host STAT2; this interaction inhibits the phosphorylation of the latter, and, when all viral proteins are present (polyprotein), targets STAT2 for degradation. Interacts with serine protease NS3. Specific enzymatic cleavages in vivo yield mature proteins. Cleavages in the lumen of endoplasmic reticulum are performed by host signal peptidase, whereas cleavages in the cytoplasmic side are performed by serine protease NS3. Signal cleavage at the 2K-4B site requires a prior NS3 protease-mediated cleavage at the 4A-2K site. In terms of processing, cleaved in post-Golgi vesicles by a host furin, releasing the mature small envelope protein M, and peptide pr. This cleavage is incomplete as up to 30% of viral particles still carry uncleaved prM. Post-translationally, N-glycosylated. N-glycosylated. The excreted form is glycosylated and this is required for efficient secretion of the protein from infected cells. In terms of processing, acetylated by host KAT5. Acetylation modulates NS3 RNA-binding and unwinding activities and plays an important positive role for viral replication. Post-translationally, phosphorylated on serines residues. This phosphorylation may trigger NS5 nuclear localization.

Its subcellular location is the virion. It localises to the host nucleus. The protein resides in the host cytoplasm. The protein localises to the host perinuclear region. It is found in the secreted. Its subcellular location is the virion membrane. It localises to the host endoplasmic reticulum membrane. It catalyses the reaction Selective hydrolysis of -Xaa-Xaa-|-Yaa- bonds in which each of the Xaa can be either Arg or Lys and Yaa can be either Ser or Ala.. The catalysed reaction is RNA(n) + a ribonucleoside 5'-triphosphate = RNA(n+1) + diphosphate. The enzyme catalyses a ribonucleoside 5'-triphosphate + H2O = a ribonucleoside 5'-diphosphate + phosphate + H(+). It carries out the reaction ATP + H2O = ADP + phosphate + H(+). It catalyses the reaction a 5'-end (5'-triphosphoguanosine)-ribonucleoside in mRNA + S-adenosyl-L-methionine = a 5'-end (N(7)-methyl 5'-triphosphoguanosine)-ribonucleoside in mRNA + S-adenosyl-L-homocysteine. The catalysed reaction is a 5'-end (N(7)-methyl 5'-triphosphoguanosine)-ribonucleoside in mRNA + S-adenosyl-L-methionine = a 5'-end (N(7)-methyl 5'-triphosphoguanosine)-(2'-O-methyl-ribonucleoside) in mRNA + S-adenosyl-L-homocysteine + H(+). Functionally, plays a role in virus budding by binding to the cell membrane and gathering the viral RNA into a nucleocapsid that forms the core of a mature virus particle. During virus entry, may induce genome penetration into the host cytoplasm after hemifusion induced by the surface proteins. Can migrate to the cell nucleus where it modulates host functions. In terms of biological role, inhibits RNA silencing by interfering with host Dicer. Its function is as follows. Prevents premature fusion activity of envelope proteins in trans-Golgi by binding to envelope protein E at pH6.0. After virion release in extracellular space, gets dissociated from E dimers. Acts as a chaperone for envelope protein E during intracellular virion assembly by masking and inactivating envelope protein E fusion peptide. prM is the only viral peptide matured by host furin in the trans-Golgi network probably to avoid catastrophic activation of the viral fusion activity in acidic Golgi compartment prior to virion release. prM-E cleavage is inefficient, and many virions are only partially matured. These uncleaved prM would play a role in immune evasion. Functionally, may play a role in virus budding. Exerts cytotoxic effects by activating a mitochondrial apoptotic pathway through M ectodomain. May display a viroporin activity. In terms of biological role, binds to host cell surface receptor and mediates fusion between viral and cellular membranes. Envelope protein is synthesized in the endoplasmic reticulum in the form of heterodimer with protein prM. They play a role in virion budding in the ER, and the newly formed immature particle is covered with 60 spikes composed of heterodimer between precursor prM and envelope protein E. The virion is transported to the Golgi apparatus where the low pH causes dissociation of PrM-E heterodimers and formation of E homodimers. prM-E cleavage is inefficient, and many virions are only partially matured. These uncleaved prM would play a role in immune evasion. Its function is as follows. Involved in immune evasion, pathogenesis and viral replication. Once cleaved off the polyprotein, is targeted to three destinations: the viral replication cycle, the plasma membrane and the extracellular compartment. Essential for viral replication. Required for formation of the replication complex and recruitment of other non-structural proteins to the ER-derived membrane structures. Excreted as a hexameric lipoparticle that plays a role against host immune response. Antagonizing the complement function. Binds to the host macrophages and dendritic cells. Inhibits signal transduction originating from Toll-like receptor 3 (TLR3). Component of the viral RNA replication complex that functions in virion assembly and antagonizes the host immune response. Functionally, required cofactor for the serine protease function of NS3. May have membrane-destabilizing activity and form viroporins. In terms of biological role, displays three enzymatic activities: serine protease, NTPase and RNA helicase. NS3 serine protease, in association with NS2B, performs its autocleavage and cleaves the polyprotein at dibasic sites in the cytoplasm: C-prM, NS2A-NS2B, NS2B-NS3, NS3-NS4A, NS4A-2K and NS4B-NS5. NS3 RNA helicase binds RNA and unwinds dsRNA in the 3' to 5' direction. Its function is as follows. Regulates the ATPase activity of the NS3 helicase activity. NS4A allows NS3 helicase to conserve energy during unwinding. Functions as a signal peptide for NS4B and is required for the interferon antagonism activity of the latter. Functionally, induces the formation of ER-derived membrane vesicles where the viral replication takes place. Inhibits interferon (IFN)-induced host STAT1 phosphorylation and nuclear translocation, thereby preventing the establishment of cellular antiviral state by blocking the IFN-alpha/beta pathway. Inhibits STAT2 translocation in the nucleus after IFN-alpha treatment. In terms of biological role, replicates the viral (+) and (-) RNA genome, and performs the capping of genomes in the cytoplasm. NS5 methylates viral RNA cap at guanine N-7 and ribose 2'-O positions. Besides its role in RNA genome replication, also prevents the establishment of cellular antiviral state by blocking the interferon-alpha/beta (IFN-alpha/beta) signaling pathway. Inhibits host TYK2 and STAT2 phosphorylation, thereby preventing activation of JAK-STAT signaling pathway. This chain is Genome polyprotein, found in Homo sapiens (Human).